The primary structure comprises 173 residues: Mesencephalic astrocyte-derived neurotrophic factor homolog (173 aa).

An N-terminal signal peptide occupies residues Met1–Ala22. Disulfide bonds link Cys28/Cys114, Cys31/Cys103, Cys61/Cys72, and Cys148/Cys151.

This sequence belongs to the ARMET family.

The protein resides in the secreted. Required during the maturation of the embryonic nervous system for maintenance of neuronal and cuticular connectivity. Essential for maintenance of dopaminergic neurons and dopamine levels. The polypeptide is Mesencephalic astrocyte-derived neurotrophic factor homolog (Drosophila ananassae (Fruit fly)).